The chain runs to 294 residues: MPSADNDTDEKPSWADLVDEAGETGLTGQIPPSSEVREGENKIVTEYKRDDEGKLQKIITTYRVETRRVAKEIAKRKLWKKFGDSKNDKPGPNKTTTNVCDDVFLILTSNKENPDATEEDPLKKLSGQKIVQCRICKGDHWTTKCPYKDQLEVIHQQLKEDDGSGQPGTPPSEPANPAAASTSGKYVAPGLRDGANRRGETMPSRSQRDETATIRVTNLSEETRESDLQELFRPLGPISRIFLAKDKFTNQSKGFAFINFVHREDAARAIEVLSGFGYDHLILNVEWAKPSTQQ.

Disordered regions lie at residues Met1–Ile43 and Glu160–Thr211. The span at Gly194–Thr211 shows a compositional bias: basic and acidic residues. In terms of domain architecture, RRM spans Ala212 to Pro290.

Belongs to the eIF-3 subunit G family. In terms of assembly, component of the eukaryotic translation initiation factor 3 (eIF-3) complex.

The protein resides in the cytoplasm. In terms of biological role, RNA-binding component of the eukaryotic translation initiation factor 3 (eIF-3) complex, which is involved in protein synthesis of a specialized repertoire of mRNAs and, together with other initiation factors, stimulates binding of mRNA and methionyl-tRNAi to the 40S ribosome. The eIF-3 complex specifically targets and initiates translation of a subset of mRNAs involved in cell proliferation. This subunit can bind 18S rRNA. This Nematostella vectensis (Starlet sea anemone) protein is Eukaryotic translation initiation factor 3 subunit G.